Here is a 64-residue protein sequence, read N- to C-terminus: Beta-defensin 5 (64 aa).

The signal sequence occupies residues 1 to 23 (MKIHYLLFAFLLVLLSPLAGVFS). 3 disulfides stabilise this stretch: cysteine 32–cysteine 60, cysteine 39–cysteine 53, and cysteine 43–cysteine 61.

Belongs to the beta-defensin family.

The protein localises to the secreted. In terms of biological role, has antibacterial activity. The sequence is that of Beta-defensin 5 (Defb5) from Mus musculus (Mouse).